Here is a 1274-residue protein sequence, read N- to C-terminus: Myosin-binding protein C, cardiac-type (1274 aa).

Met1 carries the post-translational modification N-acetylmethionine. Ser47 is subject to Phosphoserine. Residues 107–141 (APAPAEATGAPGEAPAPAAELGESAPSPKGSSSAA) are compositionally biased toward low complexity. Positions 107-153 (APAPAEATGAPGEAPAPAAELGESAPSPKGSSSAALNGPTPGAPDDP) are disordered. The Ig-like C2-type 1 domain maps to 153–256 (PIGLFVMRPQ…FDCSNFNLTV (104 aa)). 4 residues coordinate Zn(2+): Gln208, His210, Glu223, and His225. 3 positions are modified to phosphoserine; by PKA and PKC: Ser275, Ser284, and Ser304. Phosphoserine occurs at positions 311 and 427. Ig-like C2-type domains lie at 362–452 (STAF…VKEP), 453–543 (PVLI…VQEK), 544–633 (KLEV…HFME), and 645–771 (PKIH…VIDV). A disulfide bond links Cys436 and Cys443. A Phosphoserine modification is found at Ser550. A Phosphothreonine modification is found at Thr607. Fibronectin type-III domains follow at residues 774–870 (APAA…IGPP) and 872–967 (EPTH…VQEI). The Ig-like C2-type 6 domain maps to 971–1065 (PRLQLPRHLR…ATLVLQVVDK (95 aa)). A Fibronectin type-III 3 domain is found at 1068–1163 (PPQDLRVTDA…TKEPVFIPRP (96 aa)). The Ig-like C2-type 7 domain maps to 1181-1274 (PSFTQPLVNR…ECRLEVRVPQ (94 aa)). The residue at position 1241 (Arg1241) is an Omega-N-methylarginine.

The protein belongs to the immunoglobulin superfamily. MyBP family. In terms of processing, substrate for phosphorylation by PKA and PKC. Reversible phosphorylation appears to modulate contraction. Post-translationally, polyubiquitinated.

Thick filament-associated protein located in the crossbridge region of vertebrate striated muscle a bands. In vitro it binds MHC, F-actin and native thin filaments, and modifies the activity of actin-activated myosin ATPase. It may modulate muscle contraction or may play a more structural role. This Homo sapiens (Human) protein is Myosin-binding protein C, cardiac-type (MYBPC3).